The chain runs to 91 residues: MANKQDLIAKVAEATELTKKDSAAAVDAVFSAVSSYLAKGEKVQLIGFGNFEVRERAARKGRNPQTGEEIKIKASKVPAFKAGKALKDAVK.

This sequence belongs to the bacterial histone-like protein family.

In terms of biological role, histone-like DNA-binding protein which is capable of wrapping DNA to stabilize it, and thus to prevent its denaturation under extreme environmental conditions. Also seems to act as a fortuitous virulence factor in delayed sequelae by binding to heparan sulfate-proteoglycans in the extracellular matrix of target organs and acting as a nidus for in situ immune complex formation. This chain is DNA-binding protein HU (hup), found in Streptococcus mutans serotype c (strain ATCC 700610 / UA159).